A 273-amino-acid chain; its full sequence is NADPH-dependent 7-cyano-7-deazaguanine reductase (273 aa).

81–83 is a binding site for substrate; the sequence is VES. 83–84 is a binding site for NADPH; sequence SK. C179 acts as the Thioimide intermediate in catalysis. Catalysis depends on D186, which acts as the Proton donor. 218 to 219 serves as a coordination point for substrate; that stretch reads AE. 247 to 248 is an NADPH binding site; sequence RG.

The protein belongs to the GTP cyclohydrolase I family. QueF type 2 subfamily. In terms of assembly, homodimer.

Its subcellular location is the cytoplasm. It carries out the reaction 7-aminomethyl-7-carbaguanine + 2 NADP(+) = 7-cyano-7-deazaguanine + 2 NADPH + 3 H(+). It participates in tRNA modification; tRNA-queuosine biosynthesis. In terms of biological role, catalyzes the NADPH-dependent reduction of 7-cyano-7-deazaguanine (preQ0) to 7-aminomethyl-7-deazaguanine (preQ1). The chain is NADPH-dependent 7-cyano-7-deazaguanine reductase from Rickettsia canadensis (strain McKiel).